We begin with the raw amino-acid sequence, 479 residues long: M-phase inducer phosphatase (479 aa).

Residues 182-218 (MTESNTNSTTTPPPKTPETARDCFKRPEPPASANCSP) are disordered. Basic and acidic residues predominate over residues 199-209 (ETARDCFKRPE). A Rhodanese domain is found at 316-432 (KVASYRIIDC…FFESHVELCE (117 aa)). Residue cysteine 379 is part of the active site. Serine 455 carries the phosphoserine modification.

Belongs to the MPI phosphatase family.

The catalysed reaction is O-phospho-L-tyrosyl-[protein] + H2O = L-tyrosyl-[protein] + phosphate. Functionally, this protein functions as a dosage-dependent inducer in mitotic control. It is a tyrosine protein phosphatase required for progression of the cell cycle. It may directly dephosphorylate Cdk1 and activate the Cdk1 activity. This chain is M-phase inducer phosphatase (stg), found in Drosophila melanogaster (Fruit fly).